We begin with the raw amino-acid sequence, 245 residues long: Ribosomal RNA small subunit methyltransferase G (245 aa).

S-adenosyl-L-methionine contacts are provided by residues Gly90, Leu95, 140–141 (AE), and Arg158. The segment at 223–245 (VVSARRAKPPHPKSARTGKAGTR) is disordered. A compositionally biased stretch (basic residues) spans 227–245 (RRAKPPHPKSARTGKAGTR).

Belongs to the methyltransferase superfamily. RNA methyltransferase RsmG family.

Its subcellular location is the cytoplasm. In terms of biological role, specifically methylates the N7 position of guanine in position 518 of 16S rRNA. In Mycobacterium avium (strain 104), this protein is Ribosomal RNA small subunit methyltransferase G.